The following is a 178-amino-acid chain: Natriuretic and helokinestatin peptides (178 aa).

The signal sequence occupies residues 1-25 (MNPRLACSTWLPLLLVLFTLDQGRA). Propeptides lie at residues 26-58 (NPVERGQEYRSLSKRFDDDSTELILEPRASEEN), 69-73 (ASDEN), 85-89 (ASDEN), 103-112 (ASEQKGPPFN), and 123-146 (AANENALRKLIKRSFERSPGRNKR). 2 disordered regions span residues 69–107 (ASDENVPPAYVPLVPRASDENVPPPPLQMPLIPRASEQK) and 135–155 (RSFERSPGRNKRLSPGDGCFG). Residues cysteine 153 and cysteine 169 are joined by a disulfide bond.

This sequence in the C-terminal section; belongs to the natriuretic peptide family. In terms of tissue distribution, expressed by the venom gland.

The protein resides in the secreted. Helokinestatins antagonize the vasodilatory actions of bradykinin at the B2 bradykinin receptor (BDKRB2), with helokinestatin-1 being the most potent antagonist. In terms of biological role, exhibits hypotensive and vasodepressor activities, possibly by targeting natriuretic peptide receptors NPR1 and NPR2. The chain is Natriuretic and helokinestatin peptides from Heloderma suspectum cinctum (Banded Gila monster).